The chain runs to 273 residues: 4-hydroxy-tetrahydrodipicolinate reductase (273 aa).

NAD(+)-binding positions include 8–13, E34, 102–104, and 128–131; these read GCAGNM, GTT, and SPNM. Residue H161 is the Proton donor/acceptor of the active site. Residue H162 coordinates (S)-2,3,4,5-tetrahydrodipicolinate. The Proton donor role is filled by K165. 171 to 172 contacts (S)-2,3,4,5-tetrahydrodipicolinate; it reads GT.

This sequence belongs to the DapB family.

The protein localises to the cytoplasm. The enzyme catalyses (S)-2,3,4,5-tetrahydrodipicolinate + NAD(+) + H2O = (2S,4S)-4-hydroxy-2,3,4,5-tetrahydrodipicolinate + NADH + H(+). It carries out the reaction (S)-2,3,4,5-tetrahydrodipicolinate + NADP(+) + H2O = (2S,4S)-4-hydroxy-2,3,4,5-tetrahydrodipicolinate + NADPH + H(+). Its pathway is amino-acid biosynthesis; L-lysine biosynthesis via DAP pathway; (S)-tetrahydrodipicolinate from L-aspartate: step 4/4. In terms of biological role, catalyzes the conversion of 4-hydroxy-tetrahydrodipicolinate (HTPA) to tetrahydrodipicolinate. The chain is 4-hydroxy-tetrahydrodipicolinate reductase from Methanosphaera stadtmanae (strain ATCC 43021 / DSM 3091 / JCM 11832 / MCB-3).